We begin with the raw amino-acid sequence, 319 residues long: 1-aminocyclopropane-1-carboxylate oxidase (319 aa).

The region spanning 153 to 253 (PTFGTKVSNY…RMSIASFYNP (101 aa)) is the Fe2OG dioxygenase domain. Residues histidine 177, aspartate 179, and histidine 234 each coordinate Fe cation.

The protein belongs to the iron/ascorbate-dependent oxidoreductase family. Fe cation serves as cofactor.

The enzyme catalyses 1-aminocyclopropane-1-carboxylate + L-ascorbate + O2 = ethene + L-dehydroascorbate + hydrogen cyanide + CO2 + 2 H2O. It functions in the pathway alkene biosynthesis; ethylene biosynthesis via S-adenosyl-L-methionine; ethylene from S-adenosyl-L-methionine: step 2/2. This is 1-aminocyclopropane-1-carboxylate oxidase (ACO1) from Prunus mume (Japanese apricot).